We begin with the raw amino-acid sequence, 92 residues long: Large ribosomal subunit protein bL25 (92 aa).

Belongs to the bacterial ribosomal protein bL25 family. In terms of assembly, part of the 50S ribosomal subunit; part of the 5S rRNA/L5/L18/L25 subcomplex. Contacts the 5S rRNA. Binds to the 5S rRNA independently of L5 and L18.

This is one of the proteins that binds to the 5S RNA in the ribosome where it forms part of the central protuberance. The chain is Large ribosomal subunit protein bL25 from Aliivibrio salmonicida (strain LFI1238) (Vibrio salmonicida (strain LFI1238)).